Here is a 342-residue protein sequence, read N- to C-terminus: Voltage-gated hydrogen channel 1 (342 aa).

2 disordered regions span residues 1–20 (MEGD…INPN) and 74–102 (FNDN…SEQK). The Cytoplasmic segment spans residues 1-148 (MEGDNCNKSR…KLRHILHSKP (148 aa)). The span at 86–102 (QEQSTQNTMISMQSEQK) shows a compositional bias: polar residues. The helical transmembrane segment at 149 to 169 (IHVAIIVLVVLDSFLVVGELL) threads the bilayer. At 170–185 (IDLKVIIVPHGNPAPE) the chain is on the extracellular side. Residues 186 to 208 (ILHGFSLSILSIFMVEIALKIIA) traverse the membrane as a helical segment. Topologically, residues 209–217 (DHRHFIHHK) are cytoplasmic. Residues 218–238 (VEVLDAVVVVISFGVDIALIF) form a helical membrane-spanning segment. Topologically, residues 239 to 247 (VGESEALAA) are extracellular. A helical membrane pass occupies residues 248 to 268 (IGLLVILRLWRVFRIINGIIV). Topologically, residues 269–342 (TVKTKADDRV…HSTTTASADV (74 aa)) are cytoplasmic. A coiled-coil region spans residues 271–315 (KTKADDRVHEIKKKNSELELQIHNLEEKLSQKEQDMSRLHEILRC).

It belongs to the hydrogen channel family. Homodimer.

The protein localises to the membrane. It is found in the cell membrane. Its activity is regulated as follows. Less sensitive to zinc ions as compared to the mammalian homologs. In terms of biological role, mediates the voltage-dependent proton permeability of excitable membranes. Forms a proton-selective channel through which protons may pass in accordance with their electrochemical gradient. This chain is Voltage-gated hydrogen channel 1 (HVCN1), found in Ciona intestinalis (Transparent sea squirt).